Here is a 1131-residue protein sequence, read N- to C-terminus: cGMP-specific 3',5'-cyclic phosphodiesterase (1131 aa).

Disordered regions lie at residues 1 to 26 and 42 to 150; these read MTDVSSPAGGAASPVEMATSSSSAAT and GVAP…SQQD. The segment covering 42-63 has biased composition (low complexity); it reads GVAPGAVPGPGSAAIPASSSSG. Positions 75–86 are enriched in polar residues; sequence SNNNRPAATNRS. The segment covering 110–136 has biased composition (low complexity); the sequence is SSSTPSQSPSPSQSPSQASIQTQTSQQ. GAF domains are found at residues 255–412 and 444–625; these read DIDV…GIGI and NLEC…GLGI. Residues 655 to 978 enclose the PDEase domain; it reads SQDQTEKLTQ…RNWQDLAEKV (324 aa). The active-site Proton donor is His731. His735, His771, Asp772, and Asp882 together coordinate a divalent metal cation. Disordered stretches follow at residues 1019-1048 and 1078-1131; these read QQSQHGSEDSHTPEHQRSGSRLSMKKTGAL and SHVS…CALL. Basic and acidic residues-rich tracts occupy residues 1024-1035 and 1078-1088; these read GSEDSHTPEHQR and SHVSEDMDDKS. The segment covering 1097–1117 has biased composition (low complexity); sequence ASGSMGRMSASSSTSSAGGQM. Residues 1121-1131 are compositionally biased toward basic residues; sequence SKKRSKLCALL. Cys1128 is subject to Cysteine methyl ester. Residue Cys1128 is the site of S-farnesyl cysteine attachment. Residues 1129-1131 constitute a propeptide, removed in mature form; that stretch reads ALL.

The protein belongs to the cyclic nucleotide phosphodiesterase family. Interacts with PrBP. A divalent metal cation serves as cofactor.

It is found in the cell membrane. The catalysed reaction is 3',5'-cyclic GMP + H2O = GMP + H(+). In terms of biological role, has a role regulating cGMP transport in Malpighian tubule principal cells. This Drosophila erecta (Fruit fly) protein is cGMP-specific 3',5'-cyclic phosphodiesterase.